The sequence spans 214 residues: Dimethylamine corrinoid protein 2 (214 aa).

In terms of domain architecture, B12-binding N-terminal spans 1–91 (MATKEELIQE…DMPAGAATKK (91 aa)). Residues 92–214 (LGVIVNGTVE…AVAKAKELLL (123 aa)) enclose the B12-binding domain. Methylcob(III)alamin is bound at residue histidine 105.

This sequence belongs to the methylamine corrinoid protein family.

It participates in one-carbon metabolism; methanogenesis from dimethylamine. In terms of biological role, acts as a methyl group carrier between MtbB and MtbA. The protein is Dimethylamine corrinoid protein 2 (mtbC2) of Methanosarcina mazei (strain ATCC BAA-159 / DSM 3647 / Goe1 / Go1 / JCM 11833 / OCM 88) (Methanosarcina frisia).